Reading from the N-terminus, the 476-residue chain is ATP synthase subunit beta (476 aa).

Position 154-161 (154-161) interacts with ATP; it reads GGAGVGKT.

This sequence belongs to the ATPase alpha/beta chains family. F-type ATPases have 2 components, CF(1) - the catalytic core - and CF(0) - the membrane proton channel. CF(1) has five subunits: alpha(3), beta(3), gamma(1), delta(1), epsilon(1). CF(0) has three main subunits: a(1), b(2) and c(9-12). The alpha and beta chains form an alternating ring which encloses part of the gamma chain. CF(1) is attached to CF(0) by a central stalk formed by the gamma and epsilon chains, while a peripheral stalk is formed by the delta and b chains.

It is found in the cell inner membrane. It carries out the reaction ATP + H2O + 4 H(+)(in) = ADP + phosphate + 5 H(+)(out). Its function is as follows. Produces ATP from ADP in the presence of a proton gradient across the membrane. The catalytic sites are hosted primarily by the beta subunits. In Nitrobacter winogradskyi (strain ATCC 25391 / DSM 10237 / CIP 104748 / NCIMB 11846 / Nb-255), this protein is ATP synthase subunit beta.